The following is a 375-amino-acid chain: Peptidyl-prolyl cis-trans isomerase D (375 aa).

One can recognise a PPIase cyclophilin-type domain in the interval 7–169 (YFDITIANEP…QEVTISSAGV (163 aa)). TPR repeat units follow at residues 217 to 250 (AGKL…LDVH), 270 to 307 (LPLL…PNLS), and 312 to 345 (GKAL…VPGD).

It belongs to the cyclophilin-type PPIase family. PPIase D subfamily.

The protein resides in the cytoplasm. The enzyme catalyses [protein]-peptidylproline (omega=180) = [protein]-peptidylproline (omega=0). PPIases accelerate the folding of proteins. It catalyzes the cis-trans isomerization of proline imidic peptide bonds in oligopeptides. The sequence is that of Peptidyl-prolyl cis-trans isomerase D (CPR6) from Cryptococcus neoformans var. neoformans serotype D (strain B-3501A) (Filobasidiella neoformans).